A 664-amino-acid polypeptide reads, in one-letter code: Putative peroxisomal acyl-coenzyme A oxidase 1.2 (664 aa).

399–404 provides a ligand contact to FAD; the sequence is CGGHGY. A Microbody targeting signal motif is present at residues 662–664; that stretch reads AKL.

The protein belongs to the acyl-CoA oxidase family. FAD is required as a cofactor.

It localises to the peroxisome. The catalysed reaction is a 2,3-saturated acyl-CoA + O2 = a (2E)-enoyl-CoA + H2O2. Its function is as follows. Catalyzes the desaturation of acyl-CoAs to 2-trans-enoyl-CoAs. The chain is Putative peroxisomal acyl-coenzyme A oxidase 1.2 (ACX1.2) from Arabidopsis thaliana (Mouse-ear cress).